We begin with the raw amino-acid sequence, 269 residues long: Imidazole glycerol phosphate synthase subunit HisF (269 aa).

Residues Asp-23 and Asp-142 contribute to the active site.

This sequence belongs to the HisA/HisF family. Heterodimer of HisH and HisF.

The protein resides in the cytoplasm. The catalysed reaction is 5-[(5-phospho-1-deoxy-D-ribulos-1-ylimino)methylamino]-1-(5-phospho-beta-D-ribosyl)imidazole-4-carboxamide + L-glutamine = D-erythro-1-(imidazol-4-yl)glycerol 3-phosphate + 5-amino-1-(5-phospho-beta-D-ribosyl)imidazole-4-carboxamide + L-glutamate + H(+). It participates in amino-acid biosynthesis; L-histidine biosynthesis; L-histidine from 5-phospho-alpha-D-ribose 1-diphosphate: step 5/9. IGPS catalyzes the conversion of PRFAR and glutamine to IGP, AICAR and glutamate. The HisF subunit catalyzes the cyclization activity that produces IGP and AICAR from PRFAR using the ammonia provided by the HisH subunit. The polypeptide is Imidazole glycerol phosphate synthase subunit HisF (Bordetella parapertussis (strain 12822 / ATCC BAA-587 / NCTC 13253)).